We begin with the raw amino-acid sequence, 307 residues long: Metapyrocatechase (307 aa).

VOC domains follow at residues 7 to 122 (RPGH…LYAD) and 150 to 269 (RFDH…VFCG). The Fe cation site is built by His153, His214, and Glu265.

It belongs to the extradiol ring-cleavage dioxygenase family. Homotetramer. Requires Fe(2+) as cofactor.

The catalysed reaction is catechol + O2 = (2Z,4E)-2-hydroxy-6-oxohexa-2,4-dienoate + H(+). It functions in the pathway xenobiotic degradation; toluene degradation. The protein is Metapyrocatechase (bztE) of Pseudomonas aeruginosa.